The sequence spans 726 residues: Catalase-peroxidase (726 aa).

Positions 1–33 are disordered; the sequence is MSTSDDIHNTTATGKCPFHQGGHDQSAGGGTTT. The segment at residues 105-226 is a cross-link (tryptophyl-tyrosyl-methioninium (Trp-Tyr) (with M-252)); sequence WHGAGTYRSI…LGATEMGLIY (122 aa). Residue histidine 106 is the Proton acceptor of the active site. The tryptophyl-tyrosyl-methioninium (Tyr-Met) (with W-105) cross-link spans 226–252; sequence YVNPEGPDHSGEPLSAAAAIRATFGNM. Residue histidine 267 coordinates heme b.

Belongs to the peroxidase family. Peroxidase/catalase subfamily. In terms of assembly, homodimer or homotetramer. Heme b serves as cofactor. Formation of the three residue Trp-Tyr-Met cross-link is important for the catalase, but not the peroxidase activity of the enzyme.

It catalyses the reaction H2O2 + AH2 = A + 2 H2O. It carries out the reaction 2 H2O2 = O2 + 2 H2O. Functionally, bifunctional enzyme with both catalase and broad-spectrum peroxidase activity. In Escherichia coli (strain UTI89 / UPEC), this protein is Catalase-peroxidase.